The primary structure comprises 562 residues: Adenylate kinase isoenzyme 5 (562 aa).

Adenylate kinase regions lie at residues 133-316 (KIIL…MAVD) and 377-559 (KIIF…TAID). An ATP-binding site is contributed by 142–147 (GSGKGT). Residues 162–193 (SVGELLRKKIHSTSSNRKWSLIAKIITTGELA) are NMP 1. AMP contacts are provided by residues Arg-168, 191–193 (ELA), 219–222 (GFPR), and Gln-226. The segment at 256-266 (KRAEQQGRPDD) is LID 1. Residue Arg-257 coordinates ATP. Residues Arg-263 and Arg-274 each contribute to the AMP site. 386–391 (GSGKGT) serves as a coordination point for ATP. The interval 406 to 435 (STDELLQNELSSESGRSKLIRDIMERGELV) is NMP 2. AMP contacts are provided by residues Thr-407, 433 to 435 (ELV), 462 to 465 (GYPR), and Gln-469. The segment at 499–509 (QRSRNSPQADD) is LID 2. Residue Arg-500 participates in ATP binding. AMP is bound at residue Arg-517. Gly-545 is a binding site for ATP.

Belongs to the adenylate kinase family. In terms of assembly, monomer.

It is found in the cytoplasm. The catalysed reaction is AMP + ATP = 2 ADP. It catalyses the reaction a 2'-deoxyribonucleoside 5'-diphosphate + ATP = a 2'-deoxyribonucleoside 5'-triphosphate + ADP. It carries out the reaction a ribonucleoside 5'-diphosphate + ATP = a ribonucleoside 5'-triphosphate + ADP. Functionally, nucleoside monophosphate (NMP) kinase that catalyzes the reversible transfer of the terminal phosphate group between nucleoside triphosphates and monophosphates. Active on AMP and dAMP with ATP as a donor. When GTP is used as phosphate donor, the enzyme phosphorylates AMP, CMP, and to a small extent dCMP. Also displays broad nucleoside diphosphate kinase activity. The polypeptide is Adenylate kinase isoenzyme 5 (Ak5) (Bos taurus (Bovine)).